Here is a 1291-residue protein sequence, read N- to C-terminus: Tat-binding homolog 7 (1291 aa).

Residues 1–345 are disordered; the sequence is MPRSDGFSPR…HNRGERERGR (345 aa). The span at 64–82 shows a compositional bias: basic and acidic residues; it reads RYYEEEYHEAISSEEDERR. Residues 88–99 show a composition bias toward polar residues; sequence SSNSMTYRQQVM. Residues 226 to 257 are compositionally biased toward acidic residues; the sequence is EEEEEGAEEDEQSGEKDPEEEEDDSSNAESSE. Residues 298-311 show a composition bias toward basic residues; the sequence is NRHHRNRNGSRRRR. 432–439 is a binding site for ATP; the sequence is GPPGTGKT. One can recognise a Bromo domain in the interval 914–1022; it reads ALQRQMRLFF…DAIDDLIECE (109 aa). A disordered region spans residues 1110–1194; it reads KSEEGTSTST…MKDASKDSTP (85 aa). Over residues 1128–1142 the composition is skewed to basic residues; it reads NKKKLLKKKKGQKKS. Positions 1148-1164 are enriched in acidic residues; that stretch reads EEHDEDSTVEDAGEDTI. A compositionally biased stretch (basic and acidic residues) spans 1168–1190; that stretch reads LEIKKNQETPNSEHDIEMKDASK.

The protein belongs to the AAA ATPase family.

Thought to form a complex that enhances transcription from repetitive DNA sequences by modulating chromatin structure. In Caenorhabditis elegans, this protein is Tat-binding homolog 7 (lex-1).